A 397-amino-acid chain; its full sequence is Keratinocyte differentiation factor 1 (397 aa).

Residues 1-16 (MPRPGQPRPSSGPPRL) show a composition bias toward pro residues. Disordered stretches follow at residues 1-67 (MPRP…SAEP), 124-158 (EAAW…MGSS), and 191-214 (PLAD…RGSE). Positions 44–55 (RPDPKDPGHHGP) are enriched in basic and acidic residues. Over residues 201-211 (SLPSTFTSSPR) the composition is skewed to polar residues. Serine 218 is subject to Phosphoserine. Disordered regions lie at residues 304–339 (ISTR…TMVG) and 361–392 (ARKL…GAPL). Low complexity predominate over residues 321 to 330 (ARSTAPAAAP). Positions 375 to 388 (SQDSSFQGTDTDSS) are enriched in polar residues.

Its subcellular location is the cytoplasm. The protein resides in the cell junction. Its function is as follows. Plays a role in the regulation of the epidermis formation during early development. Required both as an inhibitor of basal cell proliferation and a promoter of differentiation of basal progenitor cell progeny. This Rattus norvegicus (Rat) protein is Keratinocyte differentiation factor 1 (Kdf1).